The chain runs to 70 residues: DNA gyrase inhibitor YacG (70 aa).

Residues Cys9, Cys12, Cys28, and Cys32 each contribute to the Zn(2+) site. The interval 43–70 (ESRKIPGSSIDPESIVTSNNKQDNEDEQ) is disordered.

Belongs to the DNA gyrase inhibitor YacG family. In terms of assembly, interacts with GyrB. Zn(2+) is required as a cofactor.

In terms of biological role, inhibits all the catalytic activities of DNA gyrase by preventing its interaction with DNA. Acts by binding directly to the C-terminal domain of GyrB, which probably disrupts DNA binding by the gyrase. This is DNA gyrase inhibitor YacG from Legionella pneumophila (strain Paris).